The chain runs to 902 residues: Viral-enhancing factor (902 aa).

The Peptidase M60 domain maps to His-27–Arg-330. 10 N-linked (GlcNAc...) asparagine; by host glycosylation sites follow: Asn-73, Asn-265, Asn-278, Asn-339, Asn-540, Asn-593, Asn-594, Asn-620, Asn-782, and Asn-840.

In terms of biological role, involved in disruption of the peritrophic membrane and fusion of nucleocapsids with midgut cells. This is Viral-enhancing factor (VEF) from Heliothis (HaGV).